Reading from the N-terminus, the 692-residue chain is Elongation factor G (692 aa).

Residues 8–282 form the tr-type G domain; the sequence is EKTRNIGIMA…AVLDYLPAPT (275 aa). GTP-binding positions include 17–24, 81–85, and 135–138; these read AHIDAGKT, DTPGH, and NKMD. A phosphoserine mark is found at serine 213, serine 302, serine 569, and serine 680.

This sequence belongs to the TRAFAC class translation factor GTPase superfamily. Classic translation factor GTPase family. EF-G/EF-2 subfamily. Post-translationally, phosphorylated on threonine residue(s). Phosphorylated by PrkC and dephosphorylated by PrpC, in vitro.

It is found in the cytoplasm. Catalyzes the GTP-dependent ribosomal translocation step during translation elongation. During this step, the ribosome changes from the pre-translocational (PRE) to the post-translocational (POST) state as the newly formed A-site-bound peptidyl-tRNA and P-site-bound deacylated tRNA move to the P and E sites, respectively. Catalyzes the coordinated movement of the two tRNA molecules, the mRNA and conformational changes in the ribosome. The protein is Elongation factor G (fusA) of Bacillus subtilis (strain 168).